The primary structure comprises 240 residues: Ribonuclease HII (240 aa).

Residues 21-210 (GLVAGVDEAG…VAAAVQRTVV (190 aa)) form the RNase H type-2 domain. A divalent metal cation contacts are provided by aspartate 27, glutamate 28, and aspartate 119.

Belongs to the RNase HII family. The cofactor is Mn(2+). Mg(2+) serves as cofactor.

It is found in the cytoplasm. The enzyme catalyses Endonucleolytic cleavage to 5'-phosphomonoester.. Endonuclease that specifically degrades the RNA of RNA-DNA hybrids. This chain is Ribonuclease HII, found in Paracidovorax citrulli (strain AAC00-1) (Acidovorax citrulli).